We begin with the raw amino-acid sequence, 413 residues long: UPF0754 membrane protein PCC7424_0748 (413 aa).

2 helical membrane-spanning segments follow: residues 3–23 and 391–411; these read IALELSTIWTIALPPITGAII and IVNLGGILGFFVGTIQTVILL.

This sequence belongs to the UPF0754 family.

The protein resides in the cell inner membrane. The protein is UPF0754 membrane protein PCC7424_0748 of Gloeothece citriformis (strain PCC 7424) (Cyanothece sp. (strain PCC 7424)).